Reading from the N-terminus, the 341-residue chain is Anthranilate phosphoribosyltransferase (341 aa).

5-phospho-alpha-D-ribose 1-diphosphate-binding positions include Gly-83, Ser-91, 93-96 (NTST), 111-115 (KHGNR), and Ser-123. Position 83 (Gly-83) interacts with anthranilate. Ser-95 is a Mg(2+) binding site. Residue Asn-114 participates in anthranilate binding. Arg-169 contributes to the anthranilate binding site. Positions 228 and 229 each coordinate Mg(2+).

This sequence belongs to the anthranilate phosphoribosyltransferase family. Homodimer. Requires Mg(2+) as cofactor.

It catalyses the reaction N-(5-phospho-beta-D-ribosyl)anthranilate + diphosphate = 5-phospho-alpha-D-ribose 1-diphosphate + anthranilate. Its pathway is amino-acid biosynthesis; L-tryptophan biosynthesis; L-tryptophan from chorismate: step 2/5. In terms of biological role, catalyzes the transfer of the phosphoribosyl group of 5-phosphorylribose-1-pyrophosphate (PRPP) to anthranilate to yield N-(5'-phosphoribosyl)-anthranilate (PRA). This is Anthranilate phosphoribosyltransferase from Hyphomonas neptunium (strain ATCC 15444).